Here is a 219-residue protein sequence, read N- to C-terminus: Large ribosomal subunit protein uL1 (219 aa).

This sequence belongs to the universal ribosomal protein uL1 family. Part of the 50S ribosomal subunit.

Functionally, binds directly to 23S rRNA. Probably involved in E site tRNA release. In terms of biological role, protein L1 is also a translational repressor protein, it controls the translation of its operon by binding to its mRNA. The chain is Large ribosomal subunit protein uL1 from Pyrococcus abyssi (strain GE5 / Orsay).